A 291-amino-acid polypeptide reads, in one-letter code: Pentonolactonase XacC (291 aa).

The a divalent metal cation site is built by Glu-15, Asn-141, and Asp-191. The active-site Proton donor/acceptor is the Asp-191.

The protein belongs to the SMP-30/CGR1 family. Monomer. Requires a divalent metal cation as cofactor.

The catalysed reaction is L-arabinono-1,4-lactone + H2O = L-arabinonate + H(+). It catalyses the reaction D-xylono-1,4-lactone + H2O = D-xylonate + H(+). It functions in the pathway carbohydrate degradation. Pentonolactonase involved in D-arabinose and D-xylose catabolism. Catalyzes the hydrolysis of both L-arabino-gamma-lactone and D-xylono-gamma-lactone to the corresponding acids. Can also hydrolyze D-galactono-gamma-lactone and D-glucono-delta-lactone. In Haloferax volcanii (strain ATCC 29605 / DSM 3757 / JCM 8879 / NBRC 14742 / NCIMB 2012 / VKM B-1768 / DS2) (Halobacterium volcanii), this protein is Pentonolactonase XacC.